The primary structure comprises 302 residues: Glutaminase (302 aa).

Substrate contacts are provided by S61, N111, E155, N162, Y186, Y238, and V256.

This sequence belongs to the glutaminase family. Homotetramer.

The catalysed reaction is L-glutamine + H2O = L-glutamate + NH4(+). The chain is Glutaminase from Stutzerimonas stutzeri (strain A1501) (Pseudomonas stutzeri).